Here is a 342-residue protein sequence, read N- to C-terminus: P2Y purinoceptor 12 (342 aa).

Topologically, residues 1 to 27 (MQAIDNLTSAPGNTSLCTRDYKITQVL) are extracellular. N-linked (GlcNAc...) asparagine glycans are attached at residues Asn6 and Asn13. Cystine bridges form between Cys17–Cys270 and Cys97–Cys175. The chain crosses the membrane as a helical span at residues 28–50 (FPLLYTVLFFVGLITNSLAMRIF). Residues 51–61 (FQIRSKSNFII) lie on the Cytoplasmic side of the membrane. 2 positions are modified to phosphoserine: Ser55 and Ser57. A helical membrane pass occupies residues 62–82 (FLKNTVISDLLMILTFPFKIL). The Extracellular segment spans residues 83 to 97 (SDAKLGAGPLRTFVC). ADP is bound by residues Arg93, Cys97, and Tyr105. Residues 98-118 (QVTSVIFYFTMYISISFLGLI) form a helical membrane-spanning segment. Residues 119–142 (TIDRYQKTTRPFKTSNPKNLLGAK) are Cytoplasmic-facing. A helical membrane pass occupies residues 143–162 (ILSVLIWAFMFLLSLPNMIL). ADP-binding positions include 156-159 (SLPN), 175-179 (CSFLK), His187, and Asn191. Residues 163–185 (TNRRPRDKNVKKCSFLKSEFGLV) are Extracellular-facing. The chain crosses the membrane as a helical span at residues 186 to 207 (WHEIVNYICQVIFWINFLIVIV). Residues 208–233 (CYTLITKELYRSYVRTRGVGKVPRKK) are Cytoplasmic-facing. The helical transmembrane segment at 234 to 259 (VNVKVFIIIAVFFICFVPFHFARIPY) threads the bilayer. ADP is bound by residues 256–259 (RIPY), Gln263, and Lys280. Residues 260 to 278 (TLSQTRDVFDCAAENTLFY) are Extracellular-facing. The chain crosses the membrane as a helical span at residues 279–298 (VKESTLWLTSLNACLDPFIY). At 299–342 (FFLCKSFRNSLISMLKCPNSATSQSQDNRKKEQDGGDPNEETPM) the chain is on the cytoplasmic side. Residues 317 to 342 (NSATSQSQDNRKKEQDGGDPNEETPM) are disordered. Over residues 333 to 342 (GGDPNEETPM) the composition is skewed to acidic residues.

The protein belongs to the G-protein coupled receptor 1 family.

The protein resides in the cell membrane. Receptor for ADP and ATP coupled to G-proteins that inhibit the adenylyl cyclase second messenger system. Required for normal platelet aggregation and blood coagulation. This Macaca fascicularis (Crab-eating macaque) protein is P2Y purinoceptor 12 (P2RY12).